Reading from the N-terminus, the 289-residue chain is MKIIVPATSANIGPGFDSVGVAVTKYLQIEVCEERDEWLIEHQIGKWIPHDERNLLLKIALQIVPDLQPRRLKMTSDVPLARGLGSSSSVIVAGIELANQLGQLNLSDHEKLQLATKIEGHPDNVAPAIYGNLVIASSVEGQVSAIVADFPECDFLAYIPNYELRTRDSRSVLPKKLSYKEAVAASSIANVAVAALLAGDMVTAGQAIEGDLFHERYRQDLVREFAMIKQVTKENGAYATYLSGAGPTVMVLASHDKMPIIKAELEKQPFKGKLHDLRVDTQGVRVEAK.

79–89 (PLARGLGSSSS) contacts ATP.

This sequence belongs to the GHMP kinase family. Homoserine kinase subfamily.

It localises to the cytoplasm. The enzyme catalyses L-homoserine + ATP = O-phospho-L-homoserine + ADP + H(+). Its pathway is amino-acid biosynthesis; L-threonine biosynthesis; L-threonine from L-aspartate: step 4/5. In terms of biological role, catalyzes the ATP-dependent phosphorylation of L-homoserine to L-homoserine phosphate. This is Homoserine kinase from Streptococcus pneumoniae (strain Taiwan19F-14).